A 457-amino-acid polypeptide reads, in one-letter code: MDHLPIFCQLRDRDCLIVGGGDVAERKARLLLEAGARLTVNALTFIPQFTVWANEGMLTLVEGPFDETLLDSCWLAIAATDDDTVNQRVSDAAESRRIFCNVVDAPKAASFIMPSIIDRSPLMVAVSSGGTSPVLARLLREKLESLLPQHLGQVARYAGQLRARVKKQFATMGERRRFWEKFFVNDRLAQSLANADEKAVNATTERLFSEPLDHRGEVVLVGAGPGDAGLLTLKGLQQIQQADIVVYDRLVSDDIMNLVRRDADRVFVGKRAGYHCVPQEEINQILLREAQKGKRVVRLKGGDPFIFGRGGEELETLCHAGIPFSVVPGITAASGCSAYSGIPLTHRDYAQSVRLVTGHLKTGGELDWENLAAEKQTLVFYMGLNQAATIQEKLIAFGMQADMPVALVENGTSVKQRVVHGVLTQLGELAQQVESPALIIVGRVVALRDKLNWFSNH.

The interval 4 to 202 (LPIFCQLRDR…ANADEKAVNA (199 aa)) is precorrin-2 dehydrogenase /sirohydrochlorin ferrochelatase. NAD(+)-binding positions include 22–23 (DV) and 43–44 (LT). At Ser128 the chain carries Phosphoserine. A uroporphyrinogen-III C-methyltransferase region spans residues 216–448 (GEVVLVGAGP…IIVGRVVALR (233 aa)). Pro225 lines the S-adenosyl-L-methionine pocket. The active-site Proton acceptor is Asp248. Lys270 serves as the catalytic Proton donor. S-adenosyl-L-methionine contacts are provided by residues 301–303 (GGD), Ile306, 331–332 (TA), Met382, Gly411, and Ala437.

This sequence in the N-terminal section; belongs to the precorrin-2 dehydrogenase / sirohydrochlorin ferrochelatase family. In the C-terminal section; belongs to the precorrin methyltransferase family. Homodimer.

It catalyses the reaction uroporphyrinogen III + 2 S-adenosyl-L-methionine = precorrin-2 + 2 S-adenosyl-L-homocysteine + H(+). The enzyme catalyses precorrin-2 + NAD(+) = sirohydrochlorin + NADH + 2 H(+). It carries out the reaction siroheme + 2 H(+) = sirohydrochlorin + Fe(2+). It participates in cofactor biosynthesis; adenosylcobalamin biosynthesis; precorrin-2 from uroporphyrinogen III: step 1/1. It functions in the pathway cofactor biosynthesis; adenosylcobalamin biosynthesis; sirohydrochlorin from precorrin-2: step 1/1. Its pathway is porphyrin-containing compound metabolism; siroheme biosynthesis; precorrin-2 from uroporphyrinogen III: step 1/1. The protein operates within porphyrin-containing compound metabolism; siroheme biosynthesis; siroheme from sirohydrochlorin: step 1/1. It participates in porphyrin-containing compound metabolism; siroheme biosynthesis; sirohydrochlorin from precorrin-2: step 1/1. Its function is as follows. Multifunctional enzyme that catalyzes the SAM-dependent methylations of uroporphyrinogen III at position C-2 and C-7 to form precorrin-2 via precorrin-1. Then it catalyzes the NAD-dependent ring dehydrogenation of precorrin-2 to yield sirohydrochlorin. Finally, it catalyzes the ferrochelation of sirohydrochlorin to yield siroheme. This is Siroheme synthase from Salmonella typhimurium (strain LT2 / SGSC1412 / ATCC 700720).